We begin with the raw amino-acid sequence, 203 residues long: VPS4-associated protein 1 (203 aa).

The span at 99–109 (EKETNNSKDPD) shows a compositional bias: basic and acidic residues. 2 disordered regions span residues 99 to 125 (EKET…AKND) and 171 to 193 (QVNR…EELL). Residues 110-120 (PTTTDSTDTSP) are compositionally biased toward low complexity. A coiled-coil region spans residues 121 to 157 (QAKNDAEILSETKKQYSKILDKVTELQRKNRKYELAK). Positions 171-182 (QVNRERYLKEQE) are enriched in basic and acidic residues.

Interacts with VPS4.

The protein localises to the cytoplasm. The protein resides in the endosome. VPS4-associated protein involved in trafficking to the vacuole. This is VPS4-associated protein 1 (VFA1) from Saccharomyces cerevisiae (strain ATCC 204508 / S288c) (Baker's yeast).